The primary structure comprises 714 residues: Structure-specific endonuclease subunit SLX4 1 (714 aa).

Composition is skewed to basic and acidic residues over residues 1–14 and 24–34; these read MSPE…EDNL and IHEETLAEESH. Disordered stretches follow at residues 1-116 and 337-369; these read MSPE…QGSI and DSSG…KTPQ. Over residues 36 to 46 the composition is skewed to low complexity; the sequence is QSIQRSISRLS. Basic residues predominate over residues 79–92; the sequence is KTKKRKLKVSKPRK.

The protein belongs to the SLX4 family. As to quaternary structure, forms a heterodimer with SLX1. Phosphorylated in response to DNA damage.

It is found in the nucleus. Its function is as follows. Regulatory subunit of the SLX1-SLX4 structure-specific endonuclease that resolves DNA secondary structures generated during DNA repair and recombination. Has endonuclease activity towards branched DNA substrates, introducing single-strand cuts in duplex DNA close to junctions with ss-DNA. The polypeptide is Structure-specific endonuclease subunit SLX4 1 (Candida tropicalis (strain ATCC MYA-3404 / T1) (Yeast)).